Reading from the N-terminus, the 454-residue chain is UDP-N-acetylmuramoylalanine--D-glutamate ligase (454 aa).

Residue 116–122 (GTNGKTS) coordinates ATP.

This sequence belongs to the MurCDEF family.

Its subcellular location is the cytoplasm. It carries out the reaction UDP-N-acetyl-alpha-D-muramoyl-L-alanine + D-glutamate + ATP = UDP-N-acetyl-alpha-D-muramoyl-L-alanyl-D-glutamate + ADP + phosphate + H(+). It functions in the pathway cell wall biogenesis; peptidoglycan biosynthesis. Its function is as follows. Cell wall formation. Catalyzes the addition of glutamate to the nucleotide precursor UDP-N-acetylmuramoyl-L-alanine (UMA). In Lachnoclostridium phytofermentans (strain ATCC 700394 / DSM 18823 / ISDg) (Clostridium phytofermentans), this protein is UDP-N-acetylmuramoylalanine--D-glutamate ligase.